A 281-amino-acid chain; its full sequence is 2-dehydro-3-deoxyphosphooctonate aldolase (281 aa).

Belongs to the KdsA family.

The protein localises to the cytoplasm. It catalyses the reaction D-arabinose 5-phosphate + phosphoenolpyruvate + H2O = 3-deoxy-alpha-D-manno-2-octulosonate-8-phosphate + phosphate. It participates in carbohydrate biosynthesis; 3-deoxy-D-manno-octulosonate biosynthesis; 3-deoxy-D-manno-octulosonate from D-ribulose 5-phosphate: step 2/3. The protein operates within bacterial outer membrane biogenesis; lipopolysaccharide biosynthesis. The polypeptide is 2-dehydro-3-deoxyphosphooctonate aldolase (Marinobacter nauticus (strain ATCC 700491 / DSM 11845 / VT8) (Marinobacter aquaeolei)).